Consider the following 465-residue polypeptide: Putative F-box/LRR-repeat protein At3g28410 (465 aa).

The F-box domain maps to 27-73 (ADFINYMPDDILHHILSFIPTDLAMRTSVLSRRWRHVWCETPCLDIK). LRR repeat units follow at residues 127 to 155 (VRDFTYTKTYRFPDIFYISSSLKQLDVTL), 178 to 203 (FCQIPDESMHNILSGCPILESLTLDT), 207 to 225 (LERLDLSKSPNLRRLDINR), 278 to 302 (ADRYQTMALEMLSKFHNVKRLTVGE), 332 to 357 (FVRSVIPGISRLLQNSPGLKKLTLHT), 402 to 427 (TSKLVASFMNLVLRNAKTLERMVVWL), and 447 to 465 (VETLSHNNNVSILLKQSNC).

This is Putative F-box/LRR-repeat protein At3g28410 from Arabidopsis thaliana (Mouse-ear cress).